Consider the following 189-residue polypeptide: Protein sisterless A (189 aa).

The segment at 93–124 (DCRGSGSGSGSGSGSDVKDAQRQRAESCRKSR) is disordered. Residues 108–121 (DVKDAQRQRAESCR) show a composition bias toward basic and acidic residues.

Homodimer. Interacts with dpn (via bHLH motif). Interacts with da (via bHLH motif). Interacts with Bap60. As to expression, localizes to all the embryonic nuclei until nuclear cycle 9, when expression ceases in the prepole cell nuclei. Associates with the somatic nuclei through cycle 10. By nuclear cycle 12, distributes uniformly in the somatic portion of the embryo and no longer associates with the nuclei. After early cycle 14 (beginning of cellularization) there is very little or no expression in the periphery of the embryo or in either the somatic or germ cells. In the yolk, accumulates at the nuclei from nuclear cycle 8 until 10-11 hours after fertilization.

The protein localises to the nucleus. Involved in sex determination and dosage compensation. Required for proper expression of Sxl in embryonic somatic cells. Also has an essential function in the yolk nuclei. Involved in endoderm migration and midgut formation. The protein is Protein sisterless A (sisA) of Drosophila melanogaster (Fruit fly).